Reading from the N-terminus, the 254-residue chain is MVKVILNGCSGKMGSVISNLAETKFPNVEIVAGIDNNTNAQRSYPIFAKPEDCNISYDVLLDFSRADALKSLVQFSKKTKKPLILCSTGYTAEDLKFIEESSKEIPLFRSANMSIGINLVNNLLKKVAPVLYENFDIELVERHHNQKVDAPSGTALLLAHTIQDSLNEETKLLYGREGIAKREKNEICVNTVRGGGIIGDHEVIFAGDGEVIEINHKAISRDVFAIGALKACEYMADKTKAGKYSMDDVLQLNF.

NAD(+)-binding positions include 8-13 (GCSGKM), Asp35, 86-88 (CST), and 110-113 (SANM). The active-site Proton donor/acceptor is His143. (S)-2,3,4,5-tetrahydrodipicolinate is bound at residue His144. Lys147 functions as the Proton donor in the catalytic mechanism. 153-154 (GT) provides a ligand contact to (S)-2,3,4,5-tetrahydrodipicolinate.

This sequence belongs to the DapB family.

The protein resides in the cytoplasm. It catalyses the reaction (S)-2,3,4,5-tetrahydrodipicolinate + NAD(+) + H2O = (2S,4S)-4-hydroxy-2,3,4,5-tetrahydrodipicolinate + NADH + H(+). The enzyme catalyses (S)-2,3,4,5-tetrahydrodipicolinate + NADP(+) + H2O = (2S,4S)-4-hydroxy-2,3,4,5-tetrahydrodipicolinate + NADPH + H(+). The protein operates within amino-acid biosynthesis; L-lysine biosynthesis via DAP pathway; (S)-tetrahydrodipicolinate from L-aspartate: step 4/4. Functionally, catalyzes the conversion of 4-hydroxy-tetrahydrodipicolinate (HTPA) to tetrahydrodipicolinate. The chain is 4-hydroxy-tetrahydrodipicolinate reductase from Clostridium perfringens (strain 13 / Type A).